Reading from the N-terminus, the 297-residue chain is Band 7 protein AAEL010189 (297 aa).

A compositionally biased stretch (polar residues) spans 1 to 13 (MGVVESITNSTKP). A disordered region spans residues 1 to 30 (MGVVESITNSTKPGVTKKSSPEAEDDSNGE). Residues 37-57 (ILIFLSWVLVVLTMPFSLLVC) form a helical membrane-spanning segment.

It belongs to the band 7/mec-2 family.

The protein localises to the membrane. This Aedes aegypti (Yellowfever mosquito) protein is Band 7 protein AAEL010189.